Consider the following 128-residue polypeptide: MRHYETLFVLKPTLTDEESKAKFEFIKEVIQNNGGEIVATEDLGVRKLAYPIQKFERGHYYIIYFTAPSHTVLELERIYRITEDVIRFLTIKYETKKDISAWEKMVERAKKLSGQTNSEAKEEANENV.

This sequence belongs to the bacterial ribosomal protein bS6 family.

In terms of biological role, binds together with bS18 to 16S ribosomal RNA. This chain is Small ribosomal subunit protein bS6, found in Nitratiruptor sp. (strain SB155-2).